Here is a 216-residue protein sequence, read N- to C-terminus: N-(5'-phosphoribosyl)anthranilate isomerase (216 aa).

Belongs to the TrpF family.

It carries out the reaction N-(5-phospho-beta-D-ribosyl)anthranilate = 1-(2-carboxyphenylamino)-1-deoxy-D-ribulose 5-phosphate. It participates in amino-acid biosynthesis; L-tryptophan biosynthesis; L-tryptophan from chorismate: step 3/5. The polypeptide is N-(5'-phosphoribosyl)anthranilate isomerase (Methanopyrus kandleri (strain AV19 / DSM 6324 / JCM 9639 / NBRC 100938)).